A 184-amino-acid chain; its full sequence is Ribosome-recycling factor (184 aa).

It belongs to the RRF family.

It localises to the cytoplasm. Its function is as follows. Responsible for the release of ribosomes from messenger RNA at the termination of protein biosynthesis. May increase the efficiency of translation by recycling ribosomes from one round of translation to another. In Oleidesulfovibrio alaskensis (strain ATCC BAA-1058 / DSM 17464 / G20) (Desulfovibrio alaskensis), this protein is Ribosome-recycling factor.